A 165-amino-acid chain; its full sequence is Phosphopantetheine adenylyltransferase (165 aa).

Position 10 (Ser-10) interacts with substrate. Residues 10 to 11 (SF) and His-18 each bind ATP. Positions 42, 79, and 93 each coordinate substrate. Residues 94–96 (GLR), Glu-104, and 129–135 (VRPITAT) each bind ATP.

The protein belongs to the bacterial CoaD family. Homohexamer. Mg(2+) serves as cofactor.

Its subcellular location is the cytoplasm. It catalyses the reaction (R)-4'-phosphopantetheine + ATP + H(+) = 3'-dephospho-CoA + diphosphate. It participates in cofactor biosynthesis; coenzyme A biosynthesis; CoA from (R)-pantothenate: step 4/5. Reversibly transfers an adenylyl group from ATP to 4'-phosphopantetheine, yielding dephospho-CoA (dPCoA) and pyrophosphate. The sequence is that of Phosphopantetheine adenylyltransferase from Rhodopseudomonas palustris (strain BisA53).